The following is a 527-amino-acid chain: Coiled-coil domain-containing protein 148 (527 aa).

2 coiled-coil regions span residues 289–353 (LAKD…TEIK) and 401–438 (LEKR…VAVQ).

In Mus musculus (Mouse), this protein is Coiled-coil domain-containing protein 148 (Ccdc148).